A 281-amino-acid polypeptide reads, in one-letter code: Lipoyl synthase (281 aa).

7 residues coordinate [4Fe-4S] cluster: C37, C42, C48, C63, C67, C70, and S274. Residues 49–263 (WSRGTATFMI…RQQAVNKGFK (215 aa)) enclose the Radical SAM core domain.

This sequence belongs to the radical SAM superfamily. Lipoyl synthase family. [4Fe-4S] cluster serves as cofactor.

The protein localises to the cytoplasm. The enzyme catalyses [[Fe-S] cluster scaffold protein carrying a second [4Fe-4S](2+) cluster] + N(6)-octanoyl-L-lysyl-[protein] + 2 oxidized [2Fe-2S]-[ferredoxin] + 2 S-adenosyl-L-methionine + 4 H(+) = [[Fe-S] cluster scaffold protein] + N(6)-[(R)-dihydrolipoyl]-L-lysyl-[protein] + 4 Fe(3+) + 2 hydrogen sulfide + 2 5'-deoxyadenosine + 2 L-methionine + 2 reduced [2Fe-2S]-[ferredoxin]. It participates in protein modification; protein lipoylation via endogenous pathway; protein N(6)-(lipoyl)lysine from octanoyl-[acyl-carrier-protein]: step 2/2. In terms of biological role, catalyzes the radical-mediated insertion of two sulfur atoms into the C-6 and C-8 positions of the octanoyl moiety bound to the lipoyl domains of lipoate-dependent enzymes, thereby converting the octanoylated domains into lipoylated derivatives. The polypeptide is Lipoyl synthase (Parabacteroides distasonis (strain ATCC 8503 / DSM 20701 / CIP 104284 / JCM 5825 / NCTC 11152)).